The following is a 280-amino-acid chain: Formamidopyrimidine-DNA glycosylase (280 aa).

The active-site Schiff-base intermediate with DNA is the Pro2. Glu3 (proton donor) is an active-site residue. The active-site Proton donor; for beta-elimination activity is the Lys59. The DNA site is built by His92 and Arg111. The FPG-type zinc-finger motif lies at 239–273; it reads NVYGQTGLPCNRCGTPIVKTKVAQRGTHYCPQCQQ. Catalysis depends on Arg263, which acts as the Proton donor; for delta-elimination activity.

The protein belongs to the FPG family. In terms of assembly, monomer. Zn(2+) is required as a cofactor.

The catalysed reaction is Hydrolysis of DNA containing ring-opened 7-methylguanine residues, releasing 2,6-diamino-4-hydroxy-5-(N-methyl)formamidopyrimidine.. The enzyme catalyses 2'-deoxyribonucleotide-(2'-deoxyribose 5'-phosphate)-2'-deoxyribonucleotide-DNA = a 3'-end 2'-deoxyribonucleotide-(2,3-dehydro-2,3-deoxyribose 5'-phosphate)-DNA + a 5'-end 5'-phospho-2'-deoxyribonucleoside-DNA + H(+). In terms of biological role, involved in base excision repair of DNA damaged by oxidation or by mutagenic agents. Acts as a DNA glycosylase that recognizes and removes damaged bases. Has a preference for oxidized purines, such as 7,8-dihydro-8-oxoguanine (8-oxoG). Has AP (apurinic/apyrimidinic) lyase activity and introduces nicks in the DNA strand. Cleaves the DNA backbone by beta-delta elimination to generate a single-strand break at the site of the removed base with both 3'- and 5'-phosphates. This is Formamidopyrimidine-DNA glycosylase from Enterococcus faecalis (strain ATCC 700802 / V583).